The sequence spans 163 residues: Crossover junction endodeoxyribonuclease RuvC (163 aa).

Catalysis depends on residues Asp-7, Glu-66, and Asp-139. Mg(2+)-binding residues include Asp-7, Glu-66, and Asp-139.

The protein belongs to the RuvC family. In terms of assembly, homodimer which binds Holliday junction (HJ) DNA. The HJ becomes 2-fold symmetrical on binding to RuvC with unstacked arms; it has a different conformation from HJ DNA in complex with RuvA. In the full resolvosome a probable DNA-RuvA(4)-RuvB(12)-RuvC(2) complex forms which resolves the HJ. Mg(2+) is required as a cofactor.

It is found in the cytoplasm. It carries out the reaction Endonucleolytic cleavage at a junction such as a reciprocal single-stranded crossover between two homologous DNA duplexes (Holliday junction).. The RuvA-RuvB-RuvC complex processes Holliday junction (HJ) DNA during genetic recombination and DNA repair. Endonuclease that resolves HJ intermediates. Cleaves cruciform DNA by making single-stranded nicks across the HJ at symmetrical positions within the homologous arms, yielding a 5'-phosphate and a 3'-hydroxyl group; requires a central core of homology in the junction. The consensus cleavage sequence is 5'-(A/T)TT(C/G)-3'. Cleavage occurs on the 3'-side of the TT dinucleotide at the point of strand exchange. HJ branch migration catalyzed by RuvA-RuvB allows RuvC to scan DNA until it finds its consensus sequence, where it cleaves and resolves the cruciform DNA. The sequence is that of Crossover junction endodeoxyribonuclease RuvC from Thermomicrobium roseum (strain ATCC 27502 / DSM 5159 / P-2).